We begin with the raw amino-acid sequence, 218 residues long: Large ribosomal subunit protein bL25 (218 aa).

It belongs to the bacterial ribosomal protein bL25 family. CTC subfamily. As to quaternary structure, part of the 50S ribosomal subunit; part of the 5S rRNA/L5/L18/L25 subcomplex. Contacts the 5S rRNA. Binds to the 5S rRNA independently of L5 and L18.

Its function is as follows. This is one of the proteins that binds to the 5S RNA in the ribosome where it forms part of the central protuberance. The polypeptide is Large ribosomal subunit protein bL25 (Gluconobacter oxydans (strain 621H) (Gluconobacter suboxydans)).